A 323-amino-acid chain; its full sequence is Elongation factor P--(R)-beta-lysine ligase (323 aa).

74–76 lines the substrate pocket; it reads SPE. ATP contacts are provided by residues 98 to 100 and Asn107; that span reads RNE. Tyr116 contacts substrate. An ATP-binding site is contributed by 242–243; that stretch reads EL. Glu249 serves as a coordination point for substrate. Gly298 contacts ATP.

The protein belongs to the class-II aminoacyl-tRNA synthetase family. EpmA subfamily. Homodimer.

It catalyses the reaction D-beta-lysine + L-lysyl-[protein] + ATP = N(6)-((3R)-3,6-diaminohexanoyl)-L-lysyl-[protein] + AMP + diphosphate + H(+). With EpmB is involved in the beta-lysylation step of the post-translational modification of translation elongation factor P (EF-P). Catalyzes the ATP-dependent activation of (R)-beta-lysine produced by EpmB, forming a lysyl-adenylate, from which the beta-lysyl moiety is then transferred to the epsilon-amino group of a conserved specific lysine residue in EF-P. The protein is Elongation factor P--(R)-beta-lysine ligase of Vibrio atlanticus (strain LGP32) (Vibrio splendidus (strain Mel32)).